A 318-amino-acid chain; its full sequence is DNA repair nuclease/redox regulator APEX1 (318 aa).

Residues 1 to 33 are necessary for interaction with YBX1, binding to RNA, association together with NPM1 to rRNA, endoribonuclease activity on abasic RNA and localization in the nucleoli; the sequence is MPKRGKKGAVAEDGDELKTEPEAKKSKTTAKKN. A disordered region spans residues 1 to 60; sequence MPKRGKKGAVAEDGDELKTEPEAKKSKTTAKKNDKEAAGEGPALYEDPPDQKTSPSGKPA. An N6-acetyllysine; by EP300 mark is found at Lys-6 and Lys-7. A Nuclear localization signal (NLS) motif is present at residues 8–13; sequence GAVAED. Positions 16–38 are enriched in basic and acidic residues; sequence ELKTEPEAKKSKTTAKKNDKEAA. The necessary for interaction with NPM1 and for efficient rRNA binding stretch occupies residues 23 to 33; the sequence is AKKSKTTAKKN. Lys-27, Lys-31, Lys-32, and Lys-35 each carry N6-acetyllysine. Ser-54 carries the phosphoserine modification. A Nuclear export signal (NES) motif is present at residues 64–80; the sequence is ICSWNVDGLRAWIKKKG. Position 65 is an S-nitrosocysteine; alternate (Cys-65). Cys-65 and Cys-93 are oxidised to a cystine. Asp-70 is a binding site for Mg(2+). Cys-93 is modified (S-nitrosocysteine; alternate). Glu-96 contributes to the Mg(2+) binding site. Tyr-171 is a catalytic residue. Position 197 is an N6-acetyllysine (Lys-197). The Mg(2+) site is built by Asp-210 and Asn-212. Asp-210 acts as the Proton donor/acceptor in catalysis. Thr-233 carries the phosphothreonine; by CDK5 modification. The mitochondrial targeting sequence (MTS) stretch occupies residues 289-318; that stretch reads HSLLTALCDSKIRSKALGSDHCPITLYLAL. Asp-308 contributes to the Mg(2+) binding site. Residue Cys-310 is modified to S-nitrosocysteine.

This sequence belongs to the DNA repair enzymes AP/ExoA family. In terms of assembly, monomer. Homodimer; disulfide-linked. Component of the SET complex, composed of at least APEX1, SET, ANP32A, HMGB2, NME1 and TREX1. Associates with the dimer XRCC5/XRCC6 in a DNA-dependent manner. Interacts with SIRT1; the interaction is increased in the context of genotoxic stress. Interacts with HDAC1, HDAC2 and HDAC3; the interactions are not dependent on the APEX1 acetylation status. Interacts with XRCC1; the interaction is induced by SIRT1 and increased with the APEX1 acetylated form. Interacts with NPM1 (via N-terminal domain); the interaction is RNA-dependent and decreases in hydrogen peroxide-damaged cells. Interacts (via N-terminus) with YBX1 (via C-terminus); the interaction is increased in presence of APEX1 acetylated at Lys-6 and Lys-7. Interacts with HNRNPL; the interaction is DNA-dependent. Interacts (via N-terminus) with KPNA1 and KPNA2. Interacts with TXN; the interaction stimulates the FOS/JUN AP-1 complex DNA-binding activity in a redox-dependent manner. Interacts with GZMA, KRT8, MDM2, POLB, PRDX6, PRPF19, RPLP0, TOMM20 and WDR77. Binds to CDK5. It depends on Mg(2+) as a cofactor. Mn(2+) serves as cofactor. In terms of processing, phosphorylated. Phosphorylation by kinase PKC or casein kinase CK2 results in enhanced redox activity that stimulates binding of the FOS/JUN AP-1 complex to its cognate binding site. AP-endodeoxyribonuclease activity is not affected by CK2-mediated phosphorylation. Phosphorylation of Thr-233 by CDK5 in response to MPP(+)/MPTP (1-methyl-4-phenylpyridinium) reduces AP-endodeoxyribonuclease activity resulting in accumulation of DNA damage and contributing to neuronal death. Acetylated on Lys-6 and Lys-7. Acetylation is increased by the transcriptional coactivator EP300 acetyltransferase, genotoxic agents like H(2)O(2) and methyl methanesulfonate (MMS). Acetylation increases its binding affinity to the negative calcium response element (nCaRE) DNA promoter. The acetylated form induces a stronger binding of YBX1 to the Y-box sequence in the MDR1 promoter than the unacetylated form. Deacetylated on lysines. Lys-6 and Lys-7 are deacetylated by SIRT1. Post-translationally, cleaved at Lys-31 by granzyme A to create the mitochondrial form; leading in reduction of binding to DNA, AP endodeoxyribonuclease activity, redox activation of transcription factors and to enhanced cell death. Cleaved by granzyme K; leading to intracellular ROS accumulation and enhanced cell death after oxidative stress. In terms of processing, cys-69 and Cys-93 are nitrosylated in response to nitric oxide (NO) and lead to the exposure of the nuclear export signal (NES). Ubiquitinated by MDM2; leading to translocation to the cytoplasm and proteasomal degradation.

It is found in the nucleus. The protein resides in the nucleolus. It localises to the nucleus speckle. The protein localises to the endoplasmic reticulum. Its subcellular location is the cytoplasm. It is found in the mitochondrion. The enzyme catalyses a deoxyribonucleotide-2'-deoxyribose-5'-monophosphate-DNA + H2O = a 5'-end 2'-deoxyribose-5'-monophosphate-DNA + a 3'-end 2'-deoxyribonucleotide-DNA + H(+). It catalyses the reaction Exonucleolytic cleavage in the 3'- to 5'-direction to yield nucleoside 5'-phosphates.. The catalysed reaction is a 3'-end 2'-deoxyribonucleotide-3'-phosphoglycolate-DNA + H2O = 2-phosphoglycolate + a 3'-end 2'-deoxyribonucleotide-DNA + H(+). It carries out the reaction a 3'-end 2'-deoxyribonucleotide-8-oxoguanine-DNA + H2O = 8-oxo-dGMP + a 3'-end 2'-deoxyribonucleotide-DNA + H(+). Its activity is regulated as follows. NPM1 stimulates endodeoxyribonuclease activity on double-stranded DNA with AP sites, but inhibits endoribonuclease activity on single-stranded RNA containing AP sites. In terms of biological role, multifunctional protein that plays a central role in the cellular response to oxidative stress. The two major activities of APEX1 are DNA repair and redox regulation of transcriptional factors. Functions as an apurinic/apyrimidinic (AP) endodeoxyribonuclease in the base excision repair (BER) pathway of DNA lesions induced by oxidative and alkylating agents. Initiates repair of AP sites in DNA by catalyzing hydrolytic incision of the phosphodiester backbone immediately adjacent to the damage, generating a single-strand break with 5'-deoxyribose phosphate and 3'-hydroxyl ends. Also incises at AP sites in the DNA strand of DNA/RNA hybrids, single-stranded DNA regions of R-loop structures, and single-stranded RNA molecules. Operates at switch sites of immunoglobulin (Ig) constant regions where it mediates Ig isotype class switch recombination. Processes AP sites induced by successive action of AICDA and UNG. Generates staggered nicks in opposite DNA strands resulting in the formation of double-strand DNA breaks that are finally resolved via non-homologous end joining repair pathway. Has 3'-5' exodeoxyribonuclease activity on mismatched deoxyribonucleotides at the 3' termini of nicked or gapped DNA molecules during short-patch BER. Possesses DNA 3' phosphodiesterase activity capable of removing lesions (such as phosphoglycolate and 8-oxoguanine) blocking the 3' side of DNA strand breaks. Also acts as an endoribonuclease involved in the control of single-stranded RNA metabolism. Plays a role in regulating MYC mRNA turnover by preferentially cleaving in between UA and CA dinucleotides of the MYC coding region determinant (CRD). In association with NMD1, plays a role in the rRNA quality control process during cell cycle progression. Acts as a loading factor for POLB onto non-incised AP sites in DNA and stimulates the 5'-terminal deoxyribose 5'-phosphate (dRp) excision activity of POLB. Exerts reversible nuclear redox activity to regulate DNA binding affinity and transcriptional activity of transcriptional factors by controlling the redox status of their DNA-binding domain, such as the FOS/JUN AP-1 complex after exposure to IR. Involved in calcium-dependent down-regulation of parathyroid hormone (PTH) expression by binding to negative calcium response elements (nCaREs). Together with HNRNPL or the dimer XRCC5/XRCC6, associates with nCaRE, acting as an activator of transcriptional repression. May also play a role in the epigenetic regulation of gene expression by participating in DNA demethylation. Stimulates the YBX1-mediated MDR1 promoter activity, when acetylated at Lys-6 and Lys-7, leading to drug resistance. Plays a role in protection from granzyme-mediated cellular repair leading to cell death. Binds DNA and RNA. Associates, together with YBX1, on the MDR1 promoter. Together with NPM1, associates with rRNA. The polypeptide is DNA repair nuclease/redox regulator APEX1 (APEX1) (Pongo pygmaeus (Bornean orangutan)).